Reading from the N-terminus, the 269-residue chain is NAD kinase (269 aa).

Asp45 functions as the Proton acceptor in the catalytic mechanism. Residues 45-46, 122-123, Arg149, Asp151, and Ala186 each bind NAD(+); these read DG and NE.

It belongs to the NAD kinase family. The cofactor is a divalent metal cation.

The protein localises to the cytoplasm. It carries out the reaction NAD(+) + ATP = ADP + NADP(+) + H(+). Involved in the regulation of the intracellular balance of NAD and NADP, and is a key enzyme in the biosynthesis of NADP. Catalyzes specifically the phosphorylation on 2'-hydroxyl of the adenosine moiety of NAD to yield NADP. The sequence is that of NAD kinase from Staphylococcus epidermidis (strain ATCC 35984 / DSM 28319 / BCRC 17069 / CCUG 31568 / BM 3577 / RP62A).